Here is a 210-residue protein sequence, read N- to C-terminus: Ribonuclease HII (210 aa).

Positions 18-208 (YPVAGIDEAG…VNDIISQTKL (191 aa)) constitute an RNase H type-2 domain. Residues Asp24, Glu25, and Asp116 each contribute to the a divalent metal cation site.

Belongs to the RNase HII family. It depends on Mn(2+) as a cofactor. Mg(2+) is required as a cofactor.

It localises to the cytoplasm. It carries out the reaction Endonucleolytic cleavage to 5'-phosphomonoester.. Functionally, endonuclease that specifically degrades the RNA of RNA-DNA hybrids. The protein is Ribonuclease HII of Endomicrobium trichonymphae.